Here is a 311-residue protein sequence, read N- to C-terminus: MIKLLFMGTPQFSATVLKGLLDNPAYEILGVVTQPDRAVGRKKDIKVTPVKQLALEHGISIYQPEKLSGSQELIEIMGLGADGIITAAFGQFLPTLLLDSVSFAINVHASLLPKYRGGAPIHYAIMNGDKEAGVTIMEMIKEMDAGDMVAKASTPILETDNVGTLFEKLAIIGRDLLLDSLPAYLSGELKPIPQDHSQATFSPNISPEQEKLDWTMSNQEVFNHIRGMNPWPVAHTFLEGQRLKIYEAQLAEGEGLPGQVIVKTKKSLVIATGQGALSLIVVQPAGKPKMSIIDFLNGIGRKLEVGDIIGR.

Residue 110–113 (SLLP) participates in (6S)-5,6,7,8-tetrahydrofolate binding.

This sequence belongs to the Fmt family.

The enzyme catalyses L-methionyl-tRNA(fMet) + (6R)-10-formyltetrahydrofolate = N-formyl-L-methionyl-tRNA(fMet) + (6S)-5,6,7,8-tetrahydrofolate + H(+). Attaches a formyl group to the free amino group of methionyl-tRNA(fMet). The formyl group appears to play a dual role in the initiator identity of N-formylmethionyl-tRNA by promoting its recognition by IF2 and preventing the misappropriation of this tRNA by the elongation apparatus. The protein is Methionyl-tRNA formyltransferase of Streptococcus pyogenes serotype M12 (strain MGAS2096).